A 393-amino-acid polypeptide reads, in one-letter code: SET domain-containing protein DDB_G0283443 (393 aa).

Residues Lys17–Ile312 form the SET domain.

Belongs to the class V-like SAM-binding methyltransferase superfamily.

Its function is as follows. Probable methyltransferase. In Dictyostelium discoideum (Social amoeba), this protein is SET domain-containing protein DDB_G0283443.